Here is a 184-residue protein sequence, read N- to C-terminus: uncharacterized protein (184 aa).

The Nudix hydrolase domain occupies 36 to 164; it reads LRHRATYIVV…TPDSLKALAL (129 aa). Residues 73 to 95 carry the Nudix box motif; that stretch reads GGVVQADEQLLESARREAEEELG. Glu-89 and Glu-93 together coordinate Mg(2+).

Belongs to the Nudix hydrolase family. It depends on Mg(2+) as a cofactor.

This is an uncharacterized protein from Salmonella typhi.